Consider the following 85-residue polypeptide: High-potential iron-sulfur protein (85 aa).

Positions 43, 46, 63, and 77 each coordinate [4Fe-4S] cluster.

Belongs to the high-potential iron-sulfur protein (HiPIP) family. Homodimer.

Its subcellular location is the periplasm. In terms of biological role, specific class of high-redox-potential 4Fe-4S ferredoxins. Functions in anaerobic electron transport in most purple and in some other photosynthetic bacteria and in at least one genus (Paracoccus) of halophilic, denitrifying bacteria. This chain is High-potential iron-sulfur protein, found in Allochromatium warmingii (Chromatium warmingii).